Consider the following 67-residue polypeptide: MASLKKFLFLVLFLGMVSLSICDKEKREGENEEEEEEHEEESEEKRGLFSFLPKVIGVIGPLIHPPS.

The signal sequence occupies residues 1–22; it reads MASLKKFLFLVLFLGMVSLSIC. Positions 23-46 are excised as a propeptide; it reads DKEKREGENEEEEEEHEEESEEKR. The interval 24-48 is disordered; that stretch reads KEKREGENEEEEEEHEEESEEKRGL. Positions 30–42 are enriched in acidic residues; that stretch reads ENEEEEEEHEEES.

This sequence belongs to the frog skin active peptide (FSAP) family. Dermaseptin subfamily. Expressed by the skin glands.

It localises to the secreted. The sequence is that of Preprofallaxidin-4 from Litoria fallax (Eastern dwarf tree frog).